We begin with the raw amino-acid sequence, 428 residues long: MRVVILGSGVVGVASAYYLARAGHEVTVIDREAGPALDTSFANAGQISPGYAAPWAAPGVPLKAVKWMFEKHAPLAIRLDGTRFQLQWMWQMLRNCTTERYALNKGRMVRLAEYSRDCLQALRAETDIQYEGRTGGTLQVFRTQQQLDGAAKDIAVLREANVPFELLSSDELKKAEPALAAVSHKLTGGLRLPGDETGDCQLFTTRLAALAEQLGVKFRFNTRIDALAVAGGKIAGVQCGGEMVRADAYVVALGAFSTNLVANLVKIPVYPLKGYSITAPIVDAAKAPVSTVLDETYKIAITRFDERIRVGGMAEIVGFDKRLRQARRDTLEMCVNDLFPGGGDTANASFWTGLRPMTPDGTPIVGRTPVPNLFLNTGHGTLGWTMSCGSGQLLADLMSGKKPAIRADDLSVHRYLSETDGEHRPAYA.

3–17 (VVILGSGVVGVASAY) contacts FAD.

The protein belongs to the DadA oxidoreductase family. FAD is required as a cofactor.

It catalyses the reaction a D-alpha-amino acid + A + H2O = a 2-oxocarboxylate + AH2 + NH4(+). It functions in the pathway amino-acid degradation; D-alanine degradation; NH(3) and pyruvate from D-alanine: step 1/1. Its function is as follows. Oxidative deamination of D-amino acids. The protein is D-amino acid dehydrogenase of Burkholderia thailandensis (strain ATCC 700388 / DSM 13276 / CCUG 48851 / CIP 106301 / E264).